A 490-amino-acid polypeptide reads, in one-letter code: Betaine aldehyde dehydrogenase (490 aa).

Residues Ser26, Ile27, and Asp93 each coordinate K(+). 150 to 152 lines the NAD(+) pocket; the sequence is GAW. The Charge relay system role is filled by Lys162. 176–179 lines the NAD(+) pocket; it reads KPSE. Val180 is a K(+) binding site. 230-233 contacts NAD(+); that stretch reads GVAT. A K(+)-binding site is contributed by Leu246. Residue Glu252 is the Proton acceptor of the active site. Residues Gly254, Cys286, and Glu387 each coordinate NAD(+). Cys286 acts as the Nucleophile in catalysis. Cys286 is subject to Cysteine sulfenic acid (-SOH). Residues Lys457 and Gly460 each contribute to the K(+) site. Residue Glu464 is the Charge relay system of the active site.

This sequence belongs to the aldehyde dehydrogenase family. As to quaternary structure, dimer of dimers. Requires K(+) as cofactor.

It carries out the reaction betaine aldehyde + NAD(+) + H2O = glycine betaine + NADH + 2 H(+). It participates in amine and polyamine biosynthesis; betaine biosynthesis via choline pathway; betaine from betaine aldehyde: step 1/1. Its function is as follows. Involved in the biosynthesis of the osmoprotectant glycine betaine. Catalyzes the irreversible oxidation of betaine aldehyde to the corresponding acid. The chain is Betaine aldehyde dehydrogenase from Stutzerimonas stutzeri (strain A1501) (Pseudomonas stutzeri).